Here is a 357-residue protein sequence, read N- to C-terminus: Guanine nucleotide-binding protein alpha-1 subunit (357 aa).

The N-myristoyl glycine moiety is linked to residue G2. C4 is lipidated: S-palmitoyl cysteine. The 326-residue stretch at 32-357 (NIIKLLLLGA…STKLKGCGLY (326 aa)) folds into the G-alpha domain. Positions 35-48 (KLLLLGAGESGKST) are G1 motif. GTP-binding residues include E43, S44, G45, K46, S47, T48, D151, L176, T182, G204, N270, K271, D273, and A329. S47 provides a ligand contact to Mg(2+). A G2 motif region spans residues 174-182 (DILHTRVPT). T182 contributes to the Mg(2+) binding site. Residues 197–206 (FRVFDVGGQR) are G3 motif. The G4 motif stretch occupies residues 266-273 (ILFLNKID). The interval 327–332 (TCATDT) is G5 motif.

It belongs to the G-alpha family. In terms of assembly, g proteins are composed of 3 units; alpha, beta and gamma. The alpha chain contains the guanine nucleotide binding site. Mg(2+) serves as cofactor.

Guanine nucleotide-binding proteins (G proteins) are involved as modulators or transducers in various transmembrane signaling systems. The sequence is that of Guanine nucleotide-binding protein alpha-1 subunit (gpa-1) from Caenorhabditis elegans.